We begin with the raw amino-acid sequence, 729 residues long: Fibroblast growth factor receptor homolog 1 (729 aa).

Residues 1–36 (MAAAWSWRASHSTITMTSGSLVVLFLLLSIWQPAVQ) form the signal peptide. Over 37-309 (VEGRRQMANS…VASGSLHSTS (273 aa)) the chain is Extracellular. Residues 56 to 101 (ARSQNKTPAITNNANQSSTSSADLDDGAADDDDNKADLPVNVSSKP) form a disordered region. A compositionally biased stretch (low complexity) spans 66–77 (TNNANQSSTSSA). An N-linked (GlcNAc...) asparagine glycan is attached at N70. The segment covering 78 to 89 (DLDDGAADDDDN) has biased composition (acidic residues). 9 N-linked (GlcNAc...) asparagine glycosylation sites follow: N96, N134, N140, N171, N207, N213, N242, N246, and N282. Ig-like C2-type domains are found at residues 106–192 (PKKM…VIVS) and 203–279 (TGPL…NSLG). A disulfide bridge links C125 with C174. Residues C220 and C272 are joined by a disulfide bond. Residues 310–330 (FVYIFVFGGLIFIFMTTLFVF) traverse the membrane as a helical segment. Residues 331–729 (YAIRKMKHEK…TDNLQKWCNY (399 aa)) are Cytoplasmic-facing. One can recognise a Protein kinase domain in the interval 416–692 (LVLGATLGEG…EIVEYMDKLL (277 aa)). ATP is bound by residues 422 to 430 (LGEGAFGRV) and K443. D556 functions as the Proton acceptor in the catalytic mechanism. The residue at position 587 (Y587) is a Phosphotyrosine; by autocatalysis.

Belongs to the protein kinase superfamily. Tyr protein kinase family. Fibroblast growth factor receptor subfamily. As to expression, in early embryos, expression is specific to mesodermal primordium and invaginated mesodermal cells. At later stages, expression is seen in putative muscle precursor cells and in the CNS.

Its subcellular location is the membrane. The catalysed reaction is L-tyrosyl-[protein] + ATP = O-phospho-L-tyrosyl-[protein] + ADP + H(+). May be required for patterning of muscle precursor cells. May be essential for generation of mesodermal and endodermal layers, invaginations of various types of cells and CNS formation. This chain is Fibroblast growth factor receptor homolog 1 (htl), found in Drosophila melanogaster (Fruit fly).